We begin with the raw amino-acid sequence, 569 residues long: Proline--tRNA ligase (569 aa).

It belongs to the class-II aminoacyl-tRNA synthetase family. ProS type 1 subfamily. As to quaternary structure, homodimer.

Its subcellular location is the cytoplasm. The enzyme catalyses tRNA(Pro) + L-proline + ATP = L-prolyl-tRNA(Pro) + AMP + diphosphate. Catalyzes the attachment of proline to tRNA(Pro) in a two-step reaction: proline is first activated by ATP to form Pro-AMP and then transferred to the acceptor end of tRNA(Pro). As ProRS can inadvertently accommodate and process non-cognate amino acids such as alanine and cysteine, to avoid such errors it has two additional distinct editing activities against alanine. One activity is designated as 'pretransfer' editing and involves the tRNA(Pro)-independent hydrolysis of activated Ala-AMP. The other activity is designated 'posttransfer' editing and involves deacylation of mischarged Ala-tRNA(Pro). The misacylated Cys-tRNA(Pro) is not edited by ProRS. This is Proline--tRNA ligase from Campylobacter jejuni subsp. doylei (strain ATCC BAA-1458 / RM4099 / 269.97).